Consider the following 347-residue polypeptide: S-adenosylmethionine:tRNA ribosyltransferase-isomerase (347 aa).

The protein belongs to the QueA family. Monomer.

It localises to the cytoplasm. It catalyses the reaction 7-aminomethyl-7-carbaguanosine(34) in tRNA + S-adenosyl-L-methionine = epoxyqueuosine(34) in tRNA + adenine + L-methionine + 2 H(+). It participates in tRNA modification; tRNA-queuosine biosynthesis. In terms of biological role, transfers and isomerizes the ribose moiety from AdoMet to the 7-aminomethyl group of 7-deazaguanine (preQ1-tRNA) to give epoxyqueuosine (oQ-tRNA). This is S-adenosylmethionine:tRNA ribosyltransferase-isomerase from Pseudomonas aeruginosa (strain ATCC 15692 / DSM 22644 / CIP 104116 / JCM 14847 / LMG 12228 / 1C / PRS 101 / PAO1).